The following is a 370-amino-acid chain: 4-hydroxy-3-methylbut-2-en-1-yl diphosphate synthase (flavodoxin) (370 aa).

The [4Fe-4S] cluster site is built by Cys268, Cys271, Cys303, and Glu310.

Belongs to the IspG family. Requires [4Fe-4S] cluster as cofactor.

It catalyses the reaction (2E)-4-hydroxy-3-methylbut-2-enyl diphosphate + oxidized [flavodoxin] + H2O + 2 H(+) = 2-C-methyl-D-erythritol 2,4-cyclic diphosphate + reduced [flavodoxin]. It functions in the pathway isoprenoid biosynthesis; isopentenyl diphosphate biosynthesis via DXP pathway; isopentenyl diphosphate from 1-deoxy-D-xylulose 5-phosphate: step 5/6. Functionally, converts 2C-methyl-D-erythritol 2,4-cyclodiphosphate (ME-2,4cPP) into 1-hydroxy-2-methyl-2-(E)-butenyl 4-diphosphate. This Bacillus cereus (strain G9842) protein is 4-hydroxy-3-methylbut-2-en-1-yl diphosphate synthase (flavodoxin).